The chain runs to 498 residues: Guanosine-5'-triphosphate,3'-diphosphate pyrophosphatase (498 aa).

The protein belongs to the GppA/Ppx family. GppA subfamily.

The enzyme catalyses guanosine 3'-diphosphate 5'-triphosphate + H2O = guanosine 3',5'-bis(diphosphate) + phosphate + H(+). It functions in the pathway purine metabolism; ppGpp biosynthesis; ppGpp from GTP: step 2/2. Its function is as follows. Catalyzes the conversion of pppGpp to ppGpp. Guanosine pentaphosphate (pppGpp) is a cytoplasmic signaling molecule which together with ppGpp controls the 'stringent response', an adaptive process that allows bacteria to respond to amino acid starvation, resulting in the coordinated regulation of numerous cellular activities. The polypeptide is Guanosine-5'-triphosphate,3'-diphosphate pyrophosphatase (Pectobacterium atrosepticum (strain SCRI 1043 / ATCC BAA-672) (Erwinia carotovora subsp. atroseptica)).